A 398-amino-acid polypeptide reads, in one-letter code: Aspartate aminotransferase (398 aa).

Residues Gly36, Trp132, and Asn185 each coordinate L-aspartate. The residue at position 248 (Lys248) is an N6-(pyridoxal phosphate)lysine. Residue Arg376 coordinates L-aspartate.

This sequence belongs to the class-I pyridoxal-phosphate-dependent aminotransferase family. Homodimer. It depends on pyridoxal 5'-phosphate as a cofactor.

The protein localises to the cytoplasm. The enzyme catalyses L-aspartate + 2-oxoglutarate = oxaloacetate + L-glutamate. This chain is Aspartate aminotransferase (aspC), found in Pseudomonas aeruginosa (strain ATCC 15692 / DSM 22644 / CIP 104116 / JCM 14847 / LMG 12228 / 1C / PRS 101 / PAO1).